The sequence spans 278 residues: Dermonecrotic toxin LlSicTox-alphaIII3iii (278 aa).

His-5 is an active-site residue. The Mg(2+) site is built by Glu-25 and Asp-27. The active-site Nucleophile is the His-40. Residues Cys-44 and Cys-50 are joined by a disulfide bond. Asp-84 contributes to the Mg(2+) binding site.

This sequence belongs to the arthropod phospholipase D family. Class I subfamily. Requires Mg(2+) as cofactor. Expressed by the venom gland.

It is found in the secreted. The catalysed reaction is an N-(acyl)-sphingosylphosphocholine = an N-(acyl)-sphingosyl-1,3-cyclic phosphate + choline. It catalyses the reaction an N-(acyl)-sphingosylphosphoethanolamine = an N-(acyl)-sphingosyl-1,3-cyclic phosphate + ethanolamine. The enzyme catalyses a 1-acyl-sn-glycero-3-phosphocholine = a 1-acyl-sn-glycero-2,3-cyclic phosphate + choline. It carries out the reaction a 1-acyl-sn-glycero-3-phosphoethanolamine = a 1-acyl-sn-glycero-2,3-cyclic phosphate + ethanolamine. In terms of biological role, dermonecrotic toxins cleave the phosphodiester linkage between the phosphate and headgroup of certain phospholipids (sphingolipid and lysolipid substrates), forming an alcohol (often choline) and a cyclic phosphate. This toxin acts on sphingomyelin (SM). It may also act on ceramide phosphoethanolamine (CPE), lysophosphatidylcholine (LPC) and lysophosphatidylethanolamine (LPE), but not on lysophosphatidylserine (LPS), and lysophosphatidylglycerol (LPG). It acts by transphosphatidylation, releasing exclusively cyclic phosphate products as second products. Induces dermonecrosis, hemolysis, increased vascular permeability, edema, inflammatory response, and platelet aggregation. The polypeptide is Dermonecrotic toxin LlSicTox-alphaIII3iii (Loxosceles laeta (South American recluse spider)).